The following is a 303-amino-acid chain: Pseudouridine-5'-phosphate glycosidase (303 aa).

Glu23 (proton donor) is an active-site residue. Positions 85 and 105 each coordinate substrate. Asp137 is a binding site for Mn(2+). A substrate-binding site is contributed by 139–141 (SQD). Lys158 serves as the catalytic Nucleophile.

This sequence belongs to the pseudouridine-5'-phosphate glycosidase family. In terms of assembly, homotrimer. Requires Mn(2+) as cofactor.

The catalysed reaction is D-ribose 5-phosphate + uracil = psi-UMP + H2O. Catalyzes the reversible cleavage of pseudouridine 5'-phosphate (PsiMP) to ribose 5-phosphate and uracil. Functions biologically in the cleavage direction, as part of a pseudouridine degradation pathway. The chain is Pseudouridine-5'-phosphate glycosidase from Myxococcus xanthus (strain DK1622).